The chain runs to 181 residues: FMN reductase (NADH) RutF (181 aa).

Belongs to the non-flavoprotein flavin reductase family. RutF subfamily.

It carries out the reaction FMNH2 + NAD(+) = FMN + NADH + 2 H(+). In terms of biological role, catalyzes the reduction of FMN to FMNH2 which is used to reduce pyrimidine by RutA via the Rut pathway. This chain is FMN reductase (NADH) RutF, found in Ancylobacter novellus (strain ATCC 8093 / DSM 506 / JCM 20403 / CCM 1077 / IAM 12100 / NBRC 12443 / NCIMB 10456) (Starkeya novella).